Consider the following 325-residue polypeptide: Ribose-phosphate pyrophosphokinase (325 aa).

Residues 45-47 (NGE) and 104-105 (RQ) each bind ATP. His138 and Asp178 together coordinate Mg(2+). Residue Lys202 is part of the active site. D-ribose 5-phosphate-binding positions include Arg204, Asp230, and 234–238 (DTGGT).

It belongs to the ribose-phosphate pyrophosphokinase family. Class I subfamily. In terms of assembly, homohexamer. It depends on Mg(2+) as a cofactor.

It localises to the cytoplasm. The enzyme catalyses D-ribose 5-phosphate + ATP = 5-phospho-alpha-D-ribose 1-diphosphate + AMP + H(+). Its pathway is metabolic intermediate biosynthesis; 5-phospho-alpha-D-ribose 1-diphosphate biosynthesis; 5-phospho-alpha-D-ribose 1-diphosphate from D-ribose 5-phosphate (route I): step 1/1. Functionally, involved in the biosynthesis of the central metabolite phospho-alpha-D-ribosyl-1-pyrophosphate (PRPP) via the transfer of pyrophosphoryl group from ATP to 1-hydroxyl of ribose-5-phosphate (Rib-5-P). This Corynebacterium efficiens (strain DSM 44549 / YS-314 / AJ 12310 / JCM 11189 / NBRC 100395) protein is Ribose-phosphate pyrophosphokinase.